The chain runs to 39 residues: SPbeta prophage-derived uncharacterized protein YorT (39 aa).

This is SPbeta prophage-derived uncharacterized protein YorT (yorT) from Bacillus subtilis (strain 168).